The primary structure comprises 623 residues: Glutathione import ATP-binding protein GsiA (623 aa).

ABC transporter domains lie at 15–269 and 314–564; these read VENL…RALL and LRVR…RKLL. ATP contacts are provided by residues 49-56 and 357-364; these read GESGSGKS.

This sequence belongs to the ABC transporter superfamily. Glutathione importer (TC 3.A.1.5.11) family. As to quaternary structure, the complex is composed of two ATP-binding proteins (GsiA), two transmembrane proteins (GsiC and GsiD) and a solute-binding protein (GsiB).

It is found in the cell inner membrane. It catalyses the reaction glutathione(out) + ATP + H2O = glutathione(in) + ADP + phosphate + H(+). Functionally, part of the ABC transporter complex GsiABCD involved in glutathione import. Responsible for energy coupling to the transport system. This is Glutathione import ATP-binding protein GsiA from Shigella flexneri serotype 5b (strain 8401).